The following is a 143-amino-acid chain: MLTIQEIMAIIPHRYPFLLIDRILELEPGQRAVGEKLVTIGEPYFQGHFPNRPIMPGVLIVEALAQTGAVAALSLPENRGKMAFFAGIDGVRFRKPVYPGDTLRLEVRFDKMRRGIGKGTGVATVNGQLVCEGELMFALSSEG.

His48 is a catalytic residue.

The protein belongs to the thioester dehydratase family. FabZ subfamily.

It localises to the cytoplasm. The enzyme catalyses a (3R)-hydroxyacyl-[ACP] = a (2E)-enoyl-[ACP] + H2O. Its function is as follows. Involved in unsaturated fatty acids biosynthesis. Catalyzes the dehydration of short chain beta-hydroxyacyl-ACPs and long chain saturated and unsaturated beta-hydroxyacyl-ACPs. The protein is 3-hydroxyacyl-[acyl-carrier-protein] dehydratase FabZ of Roseiflexus sp. (strain RS-1).